The following is a 292-amino-acid chain: tRNA-cytidine(32) 2-sulfurtransferase (292 aa).

Positions 54 to 59 (SGGKDS) match the PP-loop motif motif. Positions 129, 132, and 220 each coordinate [4Fe-4S] cluster.

Belongs to the TtcA family. Homodimer. The cofactor is Mg(2+). It depends on [4Fe-4S] cluster as a cofactor.

The protein resides in the cytoplasm. It catalyses the reaction cytidine(32) in tRNA + S-sulfanyl-L-cysteinyl-[cysteine desulfurase] + AH2 + ATP = 2-thiocytidine(32) in tRNA + L-cysteinyl-[cysteine desulfurase] + A + AMP + diphosphate + H(+). It participates in tRNA modification. Catalyzes the ATP-dependent 2-thiolation of cytidine in position 32 of tRNA, to form 2-thiocytidine (s(2)C32). The sulfur atoms are provided by the cysteine/cysteine desulfurase (IscS) system. The chain is tRNA-cytidine(32) 2-sulfurtransferase from Cereibacter sphaeroides (strain ATCC 17025 / ATH 2.4.3) (Rhodobacter sphaeroides).